Consider the following 624-residue polypeptide: Hemocyanin E chain (624 aa).

Histidine 169, histidine 173, histidine 200, histidine 320, histidine 324, and histidine 360 together coordinate Cu cation. Asparagine 445 carries an N-linked (GlcNAc...) asparagine glycan. An intrachain disulfide couples cysteine 529 to cysteine 577.

It belongs to the tyrosinase family. Hemocyanin subfamily. Tarantula hemocyanin is a 24-chain polymer with seven different chains identified. In terms of tissue distribution, hemolymph.

The protein resides in the secreted. The protein localises to the extracellular space. Hemocyanins are copper-containing oxygen carriers occurring freely dissolved in the hemolymph of many mollusks and arthropods. The protein is Hemocyanin E chain (HCE) of Aphonopelma sp. (American tarantula).